The following is a 127-amino-acid chain: Large ribosomal subunit protein bL12 (127 aa).

Belongs to the bacterial ribosomal protein bL12 family. Homodimer. Part of the ribosomal stalk of the 50S ribosomal subunit. Forms a multimeric L10(L12)X complex, where L10 forms an elongated spine to which 2 to 4 L12 dimers bind in a sequential fashion. Binds GTP-bound translation factors.

Functionally, forms part of the ribosomal stalk which helps the ribosome interact with GTP-bound translation factors. Is thus essential for accurate translation. This chain is Large ribosomal subunit protein bL12, found in Acidiphilium cryptum (strain JF-5).